The primary structure comprises 480 residues: MVVQNVQDLDVLPKHSSDSFDDDGRPKRTGTVWTASAHIITAVIGSGVLSLAWAVAQIGWIGGPVAMLLFSFVTFYTSTLLCSCYRSGDSVTGKRNYTYMDAIHSNLGGIKVKVCGVVQYVNLFGTAIGYTIASAISLVAIQRTSCQQMNGPNDPCHVNGNVYMIAFGIVQIIFSQIPDFDQLWWLSIVAAVMSFAYSAIGLGLGVSKVVENKEIKGSLTGVTVGTVTLSGTVTSSQKIWRTFQSLGNIAFAYSYSMILIEIQDTVKSPPAEVNTMRKATFVSVAVTTVFYMLCGCVGYAAFGDNAPGNLLAHGGFRNPYWLLDIANLAIVIHLVGAYQVYCQPLFAFVEKEASRRFPESEFVTKEIKIQLFPGKPFNLNLFRLVWRTFFVMTTTLISMLMPFFNDVVGLLGAIGFWPLTVYFPVEMYIAQKNVPRWGTKWVCLQVLSVTCLFVSVAAAAGSVIGIVSDLKVYKPFQSEF.

The segment at 1 to 25 (MVVQNVQDLDVLPKHSSDSFDDDGR) is disordered. Residues 1–31 (MVVQNVQDLDVLPKHSSDSFDDDGRPKRTGT) are Cytoplasmic-facing. Residues 11–25 (VLPKHSSDSFDDDGR) are compositionally biased toward basic and acidic residues. Transmembrane regions (helical) follow at residues 32–52 (VWTA…LSLA) and 53–73 (WAVA…FSFV). Residues 74–120 (TFYTSTLLCSCYRSGDSVTGKRNYTYMDAIHSNLGGIKVKVCGVVQY) lie on the Cytoplasmic side of the membrane. The helical transmembrane segment at 121–141 (VNLFGTAIGYTIASAISLVAI) threads the bilayer. Residues 142-157 (QRTSCQQMNGPNDPCH) lie on the Extracellular side of the membrane. A helical membrane pass occupies residues 158–178 (VNGNVYMIAFGIVQIIFSQIP). Residues 179–182 (DFDQ) lie on the Cytoplasmic side of the membrane. Residues 183-203 (LWWLSIVAAVMSFAYSAIGLG) form a helical membrane-spanning segment. Residues 204–241 (LGVSKVVENKEIKGSLTGVTVGTVTLSGTVTSSQKIWR) lie on the Extracellular side of the membrane. A helical transmembrane segment spans residues 242 to 262 (TFQSLGNIAFAYSYSMILIEI). The Cytoplasmic portion of the chain corresponds to 263–280 (QDTVKSPPAEVNTMRKAT). Residues 281 to 301 (FVSVAVTTVFYMLCGCVGYAA) traverse the membrane as a helical segment. The Extracellular portion of the chain corresponds to 302–328 (FGDNAPGNLLAHGGFRNPYWLLDIANL). The chain crosses the membrane as a helical span at residues 329-349 (AIVIHLVGAYQVYCQPLFAFV). Over 350-383 (EKEASRRFPESEFVTKEIKIQLFPGKPFNLNLFR) the chain is Cytoplasmic. A helical transmembrane segment spans residues 384–404 (LVWRTFFVMTTTLISMLMPFF). Over 405–406 (ND) the chain is Extracellular. A helical transmembrane segment spans residues 407–427 (VVGLLGAIGFWPLTVYFPVEM). Over 428–445 (YIAQKNVPRWGTKWVCLQ) the chain is Cytoplasmic. The chain crosses the membrane as a helical span at residues 446–466 (VLSVTCLFVSVAAAAGSVIGI). The Extracellular portion of the chain corresponds to 467 to 480 (VSDLKVYKPFQSEF).

The protein belongs to the amino acid/polyamine transporter 2 family. Amino acid/auxin permease (AAAP) (TC 2.A.18.2) subfamily. Expressed in leaves, stems, roots, siliques and flowers.

The protein resides in the cell membrane. Its activity is regulated as follows. Inhibited by 2,4-dinitrophenol. In terms of biological role, amino acid-proton symporter. Stereospecific transporter with a broad specificity for glutamate and both neutral and basic amino acids. Reduced affinities for asparagine and valine. High affinity transport of the cationic amino acids arginine and lysine, but not of histidine. In Arabidopsis thaliana (Mouse-ear cress), this protein is Amino acid permease 5 (AAP5).